Consider the following 874-residue polypeptide: Alanine--tRNA ligase (874 aa).

Zn(2+) is bound by residues histidine 562, histidine 566, cysteine 664, and histidine 668.

The protein belongs to the class-II aminoacyl-tRNA synthetase family. Requires Zn(2+) as cofactor.

Its subcellular location is the cytoplasm. The catalysed reaction is tRNA(Ala) + L-alanine + ATP = L-alanyl-tRNA(Ala) + AMP + diphosphate. Its function is as follows. Catalyzes the attachment of alanine to tRNA(Ala) in a two-step reaction: alanine is first activated by ATP to form Ala-AMP and then transferred to the acceptor end of tRNA(Ala). Also edits incorrectly charged Ser-tRNA(Ala) and Gly-tRNA(Ala) via its editing domain. This chain is Alanine--tRNA ligase, found in Shewanella halifaxensis (strain HAW-EB4).